We begin with the raw amino-acid sequence, 127 residues long: Aspartate 1-decarboxylase (127 aa).

Ser-25 acts as the Schiff-base intermediate with substrate; via pyruvic acid in catalysis. Residue Ser-25 is modified to Pyruvic acid (Ser). Substrate is bound at residue Thr-57. Catalysis depends on Tyr-58, which acts as the Proton donor. Substrate is bound at residue 73 to 75 (GAA).

It belongs to the PanD family. Heterooctamer of four alpha and four beta subunits. The cofactor is pyruvate. In terms of processing, is synthesized initially as an inactive proenzyme, which is activated by self-cleavage at a specific serine bond to produce a beta-subunit with a hydroxyl group at its C-terminus and an alpha-subunit with a pyruvoyl group at its N-terminus.

It is found in the cytoplasm. It catalyses the reaction L-aspartate + H(+) = beta-alanine + CO2. Its pathway is cofactor biosynthesis; (R)-pantothenate biosynthesis; beta-alanine from L-aspartate: step 1/1. Its function is as follows. Catalyzes the pyruvoyl-dependent decarboxylation of aspartate to produce beta-alanine. The protein is Aspartate 1-decarboxylase of Neisseria meningitidis serogroup A / serotype 4A (strain DSM 15465 / Z2491).